The sequence spans 519 residues: DNA-directed RNA polymerase subunit Rpo2N (519 aa).

This sequence belongs to the RNA polymerase beta chain family. As to quaternary structure, part of the RNA polymerase complex.

It localises to the cytoplasm. The catalysed reaction is RNA(n) + a ribonucleoside 5'-triphosphate = RNA(n+1) + diphosphate. Functionally, DNA-dependent RNA polymerase (RNAP) catalyzes the transcription of DNA into RNA using the four ribonucleoside triphosphates as substrates. The Rpo2 subunit (Rpo2N and Rpo2C in this organism) is implicated in DNA promoter recognition and in nucleotide binding. The polypeptide is DNA-directed RNA polymerase subunit Rpo2N (Methanothermobacter thermautotrophicus (strain ATCC 29096 / DSM 1053 / JCM 10044 / NBRC 100330 / Delta H) (Methanobacterium thermoautotrophicum)).